The primary structure comprises 608 residues: Chaperone protein DnaK (608 aa).

Residue Thr-175 is modified to Phosphothreonine; by autocatalysis.

This sequence belongs to the heat shock protein 70 family.

Acts as a chaperone. This chain is Chaperone protein DnaK, found in Finegoldia magna (strain ATCC 29328 / DSM 20472 / WAL 2508) (Peptostreptococcus magnus).